Consider the following 222-residue polypeptide: Thymidylate kinase (222 aa).

ATP-binding positions include 29–34 and arginine 111; that span reads RVGKST. An LID region spans residues 146-170; it reads LSMSSEDATKRGEYGGERYEKLEFQ.

This sequence belongs to the thymidylate kinase family. As to quaternary structure, homodimer. Requires Mg(2+) as cofactor.

The catalysed reaction is dTMP + ATP = dTDP + ADP. The protein operates within pyrimidine metabolism; dTTP biosynthesis. Catalyzes the phosphorylation of thymidine monophosphate (dTMP) to thymidine diphosphate (dTDP), the immediate precursor for the DNA building block dTTP, with ATP as the preferred phosphoryl donor in the presence of Mg(2+). The sequence is that of Thymidylate kinase (dtymk) from Dictyostelium discoideum (Social amoeba).